Consider the following 214-residue polypeptide: Nucleoplasmin-2 (214 aa).

Positions 119–214 (ERYEASDLTW…ARAKKPGFKK (96 aa)) are disordered. Positions 127–155 (TWEEEEEEEGEEEEEEEEDDEDEDADISL) are enriched in acidic residues. The interval 129 to 152 (EEEEEEEGEEEEEEEEDDEDEDAD) is acidic tract A2. The short motif at 165 to 180 (KRLVPQKQASVAKKKK) is the Bipartite nuclear localization signal element. The span at 181-197 (LEKEEEEIRASVRDKSP) shows a compositional bias: basic and acidic residues. A compositionally biased stretch (basic residues) spans 198-214 (VKKAKATARAKKPGFKK).

Belongs to the nucleoplasmin family. In terms of assembly, homopentamer, when bound to H2A-H2B dimers only. Homodecamer of two stacked pentamers, when bound to H2A-H2B dimers and H3-H4 tetramers simultaneously.

The protein resides in the nucleus. In terms of biological role, core histones chaperone involved in chromatin reprogramming, specially during fertilization and early embryonic development. Probably involved in sperm DNA decondensation during fertilization. The polypeptide is Nucleoplasmin-2 (NPM2) (Homo sapiens (Human)).